The sequence spans 561 residues: Arginine--tRNA ligase (561 aa).

Residues 128–138 carry the 'HIGH' region motif; that stretch reads ANPTGPLHVGH.

The protein belongs to the class-I aminoacyl-tRNA synthetase family. As to quaternary structure, monomer.

Its subcellular location is the cytoplasm. It catalyses the reaction tRNA(Arg) + L-arginine + ATP = L-arginyl-tRNA(Arg) + AMP + diphosphate. This chain is Arginine--tRNA ligase, found in Methylibium petroleiphilum (strain ATCC BAA-1232 / LMG 22953 / PM1).